A 496-amino-acid polypeptide reads, in one-letter code: MADSEDGDHVATTTTEQRYDDDGHLVPSSGGQEEEGSGGRDVVVPGGHVAEDYRSGVGVPVGRDAGGATSSPPQPVHVTPSILVGSIHAPVFQGELVGMKFGVGSGSMGAGTSATRRLPATGFGALPTSSMAEDSADHADDDHLAEEEEEEEEEHYIDDGPLVPSSGGQEEEGSGGRHVFVPGGHDGEEDHPDDLVADLDLDLLVDGVVGPVPGGHLNADAPAFVPTTRGRQDLYSALSSSAPAAGYRYRHYITSSALAEAGHVSPFLGLPYATAFDSPLDRELVGPSSAPPPCSAASRAWLVRCSSPLSDSEWTRRSILAREAAHTPASTVTGRGRFEFVPIPGAPYAPPPSFAPIAAGAGPAARPLQQLAFGLEEHKTKLCAEYYSRGLGCPRGNTCKYAHGEDDLRLVVAVSSLADAGEGSSSSDSSFAALGGEDKYKTKLCKTFTSGGLCLFAANCRFAHGEVELGKKEPCWYFFSGQTCPRGDTCGFRHSY.

2 disordered regions span residues 1–77 (MADS…QPVH) and 108–194 (MGAG…HPDD). Over residues 143 to 156 (HLAEEEEEEEEEHY) the composition is skewed to acidic residues. C3H1-type zinc fingers lie at residues 377 to 406 (EHKT…HGED), 439 to 467 (KYKT…HGEV), and 469 to 496 (LGKK…RHSY).

The sequence is that of Putative zinc finger CCCH domain-containing protein 48 from Oryza sativa subsp. japonica (Rice).